The sequence spans 175 residues: NADH-ubiquinone oxidoreductase chain 6 (175 aa).

5 helical membrane passes run 1-21 (MMTYIVFILSIVFVMSFVGFA), 25-45 (SPIYGGLVLIISGGIGCAIVL), 47-67 (FGGSFLGLMVFLIYLGGMLVV), 88-108 (AVLAAFITGLLSELLTACYIL), and 149-169 (YGTWLVVVTGWSLLIGVLVIM).

The protein belongs to the complex I subunit 6 family. As to quaternary structure, core subunit of respiratory chain NADH dehydrogenase (Complex I) which is composed of 45 different subunits.

It localises to the mitochondrion inner membrane. It carries out the reaction a ubiquinone + NADH + 5 H(+)(in) = a ubiquinol + NAD(+) + 4 H(+)(out). In terms of biological role, core subunit of the mitochondrial membrane respiratory chain NADH dehydrogenase (Complex I) which catalyzes electron transfer from NADH through the respiratory chain, using ubiquinone as an electron acceptor. Essential for the catalytic activity and assembly of complex I. This chain is NADH-ubiquinone oxidoreductase chain 6 (MT-ND6), found in Canis lupus familiaris (Dog).